We begin with the raw amino-acid sequence, 70 residues long: NADH dehydrogenase [ubiquinone] 1 alpha subcomplex subunit 1 (70 aa).

Residues 1–21 (MWFEILPGLSVMGVCLLIPGL) form a helical membrane-spanning segment.

Belongs to the complex I NDUFA1 subunit family. Complex I is composed of 45 different subunits. As to expression, primarily expressed in heart and skeletal muscle.

The protein localises to the mitochondrion inner membrane. Its function is as follows. Accessory subunit of the mitochondrial membrane respiratory chain NADH dehydrogenase (Complex I), that is believed not to be involved in catalysis. Complex I functions in the transfer of electrons from NADH to the respiratory chain. The immediate electron acceptor for the enzyme is believed to be ubiquinone. The chain is NADH dehydrogenase [ubiquinone] 1 alpha subcomplex subunit 1 (NDUFA1) from Homo sapiens (Human).